The primary structure comprises 221 residues: MAQGILGKKIGMTQMFNEQGEIIPITIVDVSANVVLQQKNVAIDGYNATQIGFDDKKDKITTKPMLGHFKKAKTTPKRFIKEIIFKKENISSLSALAVGDQVSCDLFQVGDLVDVTGTSKGKGFAGVIKRHNQSRGPETHGSRHHRRPGSMGPIKGKIKGKKLPGQMGHQTVTIQNLVLFSVDNQKNLFLIKGSVPGPNKGFVVIKSAVKKLSKEQANAKI.

The interval 131–165 (HNQSRGPETHGSRHHRRPGSMGPIKGKIKGKKLPG) is disordered.

Belongs to the universal ribosomal protein uL3 family. In terms of assembly, part of the 50S ribosomal subunit. Forms a cluster with proteins L14 and L19.

Its function is as follows. One of the primary rRNA binding proteins, it binds directly near the 3'-end of the 23S rRNA, where it nucleates assembly of the 50S subunit. This is Large ribosomal subunit protein uL3 from Phytoplasma australiense.